Here is a 147-residue protein sequence, read N- to C-terminus: Fluoride-specific ion channel FluC 1 (147 aa).

The next 4 helical transmembrane spans lie at 29 to 49 (YVYI…ISFL), 61 to 81 (IANL…IAFF), 90 to 110 (AITT…LELI), and 118 to 138 (FITL…LCYV). Na(+)-binding residues include Gly97 and Thr100.

This sequence belongs to the fluoride channel Fluc/FEX (TC 1.A.43) family.

The protein resides in the cell membrane. It carries out the reaction fluoride(in) = fluoride(out). With respect to regulation, na(+) is not transported, but it plays an essential structural role and its presence is essential for fluoride channel function. Fluoride-specific ion channel. Important for reducing fluoride concentration in the cell, thus reducing its toxicity. The protein is Fluoride-specific ion channel FluC 1 of Staphylococcus aureus (strain Mu50 / ATCC 700699).